A 79-amino-acid chain; its full sequence is MMKNQFQLSLIILTFFILLELGVMGNVQQVKREQCHTVIPNKSGKCIFTECKSACEKLKKPVASLCLPPKTCRCYHFCS.

Positions 1–25 (MMKNQFQLSLIILTFFILLELGVMG) are cleaved as a signal peptide. Disulfide bonds link Cys35/Cys78, Cys46/Cys66, Cys51/Cys72, and Cys55/Cys74.

It belongs to the DEFL family.

It is found in the secreted. This is Putative defensin-like protein 146 (LCR9) from Arabidopsis thaliana (Mouse-ear cress).